The chain runs to 474 residues: UDP-N-acetylmuramate--L-alanine ligase (474 aa).

115-121 provides a ligand contact to ATP; it reads GTHGKTT.

It belongs to the MurCDEF family.

It is found in the cytoplasm. The enzyme catalyses UDP-N-acetyl-alpha-D-muramate + L-alanine + ATP = UDP-N-acetyl-alpha-D-muramoyl-L-alanine + ADP + phosphate + H(+). Its pathway is cell wall biogenesis; peptidoglycan biosynthesis. In terms of biological role, cell wall formation. This chain is UDP-N-acetylmuramate--L-alanine ligase, found in Novosphingobium aromaticivorans (strain ATCC 700278 / DSM 12444 / CCUG 56034 / CIP 105152 / NBRC 16084 / F199).